Consider the following 226-residue polypeptide: Ribonuclease 3 (226 aa).

One can recognise an RNase III domain in the interval 5–127 (IFQRGDPIGH…IVAAIYLDCG (123 aa)). Glu-40 contacts Mg(2+). Residue Asp-44 is part of the active site. Positions 113 and 116 each coordinate Mg(2+). Glu-116 is an active-site residue. The 71-residue stretch at 154–224 (DPKTRLQEWL…ATLVIAQLDS (71 aa)) folds into the DRBM domain.

It belongs to the ribonuclease III family. Homodimer. Mg(2+) serves as cofactor.

It is found in the cytoplasm. It catalyses the reaction Endonucleolytic cleavage to 5'-phosphomonoester.. Digests double-stranded RNA. Involved in the processing of primary rRNA transcript to yield the immediate precursors to the large and small rRNAs (23S and 16S). Processes some mRNAs, and tRNAs when they are encoded in the rRNA operon. Processes pre-crRNA and tracrRNA of type II CRISPR loci if present in the organism. The protein is Ribonuclease 3 of Xanthomonas oryzae pv. oryzae (strain KACC10331 / KXO85).